The primary structure comprises 160 residues: MNDQIKIRKATKEDWEKIYQLYNSLSDEDLYLRFFHLYRITEEDAKKIASNEDHVTFLAEVDGKVVGEASLHKDGEFSLVVHRNYRTLGIGTLLVKTLIEEAKKSGLSTVKFYTLPENTPMIKIGRKLGFKMRFYEDEVYGEMRLTERELNVNLATFSAP.

In terms of domain architecture, N-acetyltransferase spans 5-148 (IKIRKATKED…VYGEMRLTER (144 aa)). CoA contacts are provided by Leu-79, Val-81, Thr-87, Gly-89, Gly-91, Thr-92, Asn-118, Lys-123, and Lys-127.

Belongs to the acetyltransferase family. GNAT subfamily.

The enzyme catalyses L-lysyl-[protein] + acetyl-CoA = N(6)-acetyl-L-lysyl-[protein] + CoA + H(+). In terms of biological role, modulates activity of albA1, the major archaeal DNA compaction protein, by decreasing albA1's nucleic acid binding affinity through acetylation of 'Lys-16'. This Saccharolobus solfataricus (strain ATCC 35092 / DSM 1617 / JCM 11322 / P2) (Sulfolobus solfataricus) protein is N-acetyltransferase Pat.